Consider the following 493-residue polypeptide: Dipeptide permease D (493 aa).

13 consecutive transmembrane segments (helical) span residues 14-34, 49-69, 91-111, 138-158, 167-187, 212-232, 235-255, 267-287, 312-332, 344-364, 379-399, 413-433, and 458-478; these read VVAL…LLIL, ELFS…GYLA, LVLG…AIIV, GGFS…PIAC, WAMG…IFLC, NWGW…VLFW, WSVY…AKIY, LGLI…AQQG, MFQS…AWLV, IWGK…ILTL, LMVL…PVAM, VLTG…AGVI, and VFEQ…LIWL.

Belongs to the major facilitator superfamily. Proton-dependent oligopeptide transporter (POT/PTR) (TC 2.A.17) family. DtpD subfamily.

It is found in the cell inner membrane. Functionally, probable proton-dependent permease that transports dipeptides. This Salmonella paratyphi C (strain RKS4594) protein is Dipeptide permease D.